The sequence spans 214 residues: Protein verrocchio (214 aa).

Probably homomultimerizes. Component of the MTV complex, composed of moi/modigliani, tea and ver/verrocchio. Interacts with moi/modigliani and tea (via C-terminus); the interactions are direct and require fully intact moi/modigliani and ver/verrocchio. The MTV complex is recruited to telomeres by the HipHop-HOAP complex, consisting of HipHop, cav/HOAP and Su(var)205/HP1 to form the terminin telomere-capping complex. Interacts with cav/HOAP; the interaction is direct. Interacts with Su(var)205/HP1; the interaction is indirect and probably requires cav/HOAP or moi/modigliani. Probably interacts with peo (via N-terminus and UBC domain).

The protein localises to the nucleus. Its subcellular location is the chromosome. It localises to the telomere. Functionally, part of the MTV complex that associates with the HipHop-HOAP complex to form the terminin telomere-capping complex involved in telomere maintenance and prevention of telomere fusion. As part of the MTV complex binds single stranded DNA in a sequence-independent manner, protecting it from degradation. The protein is Protein verrocchio of Drosophila melanogaster (Fruit fly).